Reading from the N-terminus, the 209-residue chain is Glutathione S-transferase 2 (209 aa).

Positions Met-1–Asp-81 constitute a GST N-terminal domain. Glutathione-binding positions include Ser-10, Arg-51–Ile-53, and Glu-65–Arg-67. Residues Asp-88–Lys-209 enclose the GST C-terminal domain.

It belongs to the GST superfamily. Theta family. In terms of assembly, homodimer.

It carries out the reaction RX + glutathione = an S-substituted glutathione + a halide anion + H(+). Its function is as follows. Conjugation of reduced glutathione to a wide number of exogenous and endogenous hydrophobic electrophiles. This is Glutathione S-transferase 2 (GstD2) from Anopheles gambiae (African malaria mosquito).